The sequence spans 319 residues: ATP-dependent 6-phosphofructokinase (319 aa).

Residue glycine 11 participates in ATP binding. Residue 21 to 25 coordinates ADP; the sequence is RAVVR. ATP contacts are provided by residues 72-73 and 102-105; these read RC and GDGS. Mg(2+) is bound at residue aspartate 103. A substrate-binding site is contributed by 125–127; that stretch reads TID. Residue aspartate 127 is the Proton acceptor of the active site. Residue arginine 154 coordinates ADP. Substrate is bound by residues arginine 162 and 169-171; that span reads MGR. ADP-binding positions include 185-187, arginine 211, and 213-215; these read GAE and KKH. Substrate-binding positions include glutamate 222, arginine 243, and 249-252; that span reads HVQR.

It belongs to the phosphofructokinase type A (PFKA) family. ATP-dependent PFK group I subfamily. Prokaryotic clade 'B1' sub-subfamily. As to quaternary structure, homotetramer. The cofactor is Mg(2+).

Its subcellular location is the cytoplasm. It carries out the reaction beta-D-fructose 6-phosphate + ATP = beta-D-fructose 1,6-bisphosphate + ADP + H(+). The protein operates within carbohydrate degradation; glycolysis; D-glyceraldehyde 3-phosphate and glycerone phosphate from D-glucose: step 3/4. With respect to regulation, allosterically activated by ADP and other diphosphonucleosides, and allosterically inhibited by phosphoenolpyruvate. Its function is as follows. Catalyzes the phosphorylation of D-fructose 6-phosphate to fructose 1,6-bisphosphate by ATP, the first committing step of glycolysis. The polypeptide is ATP-dependent 6-phosphofructokinase (Geobacillus sp. (strain WCH70)).